A 161-amino-acid chain; its full sequence is 3-isopropylmalate dehydratase small subunit (161 aa).

It belongs to the LeuD family. LeuD type 2 subfamily. In terms of assembly, heterodimer of LeuC and LeuD.

It carries out the reaction (2R,3S)-3-isopropylmalate = (2S)-2-isopropylmalate. It participates in amino-acid biosynthesis; L-leucine biosynthesis; L-leucine from 3-methyl-2-oxobutanoate: step 2/4. Functionally, catalyzes the isomerization between 2-isopropylmalate and 3-isopropylmalate, via the formation of 2-isopropylmaleate. This chain is 3-isopropylmalate dehydratase small subunit, found in Clostridium beijerinckii (strain ATCC 51743 / NCIMB 8052) (Clostridium acetobutylicum).